Here is a 403-residue protein sequence, read N- to C-terminus: Na(+)-translocating NADH-quinone reductase subunit B (403 aa).

9 consecutive transmembrane segments (helical) span residues 56–76, 121–141, 164–184, 225–245, 260–280, 287–307, 312–332, 348–368, and 371–391; these read MMII…YNVG, AYFL…EVLF, LPPS…VVLG, GFAG…NILG, GSMG…LLLT, IVAG…AIGS, MFAM…GMIF, WLFG…NPAF, and GMML…HFVV. FMN phosphoryl threonine is present on Thr-230.

The protein belongs to the NqrB/RnfD family. In terms of assembly, composed of six subunits; NqrA, NqrB, NqrC, NqrD, NqrE and NqrF. It depends on FMN as a cofactor.

It is found in the cell inner membrane. The catalysed reaction is a ubiquinone + n Na(+)(in) + NADH + H(+) = a ubiquinol + n Na(+)(out) + NAD(+). Functionally, NQR complex catalyzes the reduction of ubiquinone-1 to ubiquinol by two successive reactions, coupled with the transport of Na(+) ions from the cytoplasm to the periplasm. NqrA to NqrE are probably involved in the second step, the conversion of ubisemiquinone to ubiquinol. In Pseudomonas aeruginosa (strain LESB58), this protein is Na(+)-translocating NADH-quinone reductase subunit B.